Reading from the N-terminus, the 542-residue chain is MFCEQCEQTASGNGCHQWGACGKSPEVNAVQDLLVYCLRGLASVVLKAKEAAISTREADIFTCESLFATMTNVNFDQRRFTDYIQRCLEIRENLKAQLGSLDWSALANYQPNFNESLVSQGQEVSLELIEKVQDLDIFSLKLTAIYGVKGLASYTFHAQELGQEDDSVYQVIQETLVAIDRSDLNLNDWVAICLKVGAANLRAMELLDQGHTETYGHPIPTNVPLNPRLGKAILVSGHDIKQLAALLAQTANTGITVYTHGELLPAHGYPKLKEKYPHLYGHYGTAWQNQTKEFAKFPGAIVLTTNCLMPPHENYESKLFTLGPVGYAHINRLETVDGAIDFSPVIAKAQSLLGFTEISEPRQVMVGFAHNTVLSVADTVVNALKQGKIRHFFLVGGCDGAKPDRNYYTEFVEQVPEDCIVLTLACGKFRFFDKQLGSIEGLPRLMDLGQCNDAYSAIKIALGLANAFNVSVNEIPLSLIISWYEQKAIAVLLTLLHLGMQNIRLGPTLPAFISPNVLKFLSDTYHLQPITTPAKDLADCLG.

4 residues coordinate [4Fe-4S] cluster: Cys-3, Cys-6, Cys-15, and Cys-21. Hybrid [4Fe-2O-2S] cluster contacts are provided by His-238, Glu-262, Cys-307, Cys-398, Cys-426, Cys-451, Glu-485, and Lys-487. The residue at position 398 (Cys-398) is a Cysteine persulfide.

Belongs to the HCP family. Requires [4Fe-4S] cluster as cofactor. Hybrid [4Fe-2O-2S] cluster serves as cofactor.

It is found in the cytoplasm. It carries out the reaction A + NH4(+) + H2O = hydroxylamine + AH2 + H(+). Its function is as follows. Catalyzes the reduction of hydroxylamine to form NH(3) and H(2)O. This is Hydroxylamine reductase from Microcystis aeruginosa (strain NIES-843 / IAM M-2473).